Consider the following 683-residue polypeptide: Inositol-trisphosphate 3-kinase C (683 aa).

The segment at Met1–Leu124 is disordered. A compositionally biased stretch (low complexity) spans Ala13–Ala22. Residues Pro44–Pro58 are compositionally biased toward gly residues. Basic and acidic residues predominate over residues Glu105 to Leu124. 2 positions are modified to phosphoserine: Ser127 and Ser162. Residues Thr147–Pro308 are disordered. The span at Trp196 to Thr206 shows a compositional bias: polar residues. Residues Ser249–Arg259 show a composition bias toward basic and acidic residues. Positions Phe267 to Pro289 are enriched in polar residues. The segment covering Glu297–Pro308 has biased composition (acidic residues). Positions Leu324 to Ile332 match the Nuclear export signal motif. A disordered region spans residues Pro334–Lys387. The residue at position 336 (Thr336) is a Phosphothreonine. Ser404 carries the phosphoserine modification. ATP-binding positions include Lys431, Glu471–Leu473, and Asp484. Residues Lys486, Arg507–Lys513, and Lys534–Arg541 contribute to the substrate site. The calmodulin-binding stretch occupies residues Asp509–Val517. ATP contacts are provided by Lys558 and Asp638. Lys641 lines the substrate pocket.

It belongs to the inositol phosphokinase (IPK) family. As to expression, highly expressed in pancreas, skeletal muscle, liver, placenta and weakly in kidney and brain.

The protein localises to the nucleus. It localises to the cytoplasm. The enzyme catalyses 1D-myo-inositol 1,4,5-trisphosphate + ATP = 1D-myo-inositol 1,3,4,5-tetrakisphosphate + ADP + H(+). Activated by calcium/calmodulin. Inhibited by high concentrations of the substrate Ins(1,2,4)P3, and allosterically activated by the product Ins(1,3,4,5)P4. Its function is as follows. Catalyzes the phosphorylation of 1D-myo-inositol 1,4,5-trisphosphate (InsP3) into 1D-myo-inositol 1,3,4,5-tetrakisphosphate and participates to the regulation of calcium homeostasis. Can phosphorylate inositol 2,4,5-triphosphate to inositol 2,4,5,6-tetraphosphate. The chain is Inositol-trisphosphate 3-kinase C from Homo sapiens (Human).